The primary structure comprises 240 residues: Protein GrpE (240 aa).

2 disordered regions span residues 1–54 and 206–240; these read MSGD…NEAR and VSMG…DGNG. Low complexity predominate over residues 215 to 233; sequence GASSQPAEAPAADAPAEDS.

Belongs to the GrpE family. As to quaternary structure, homodimer.

Its subcellular location is the cytoplasm. In terms of biological role, participates actively in the response to hyperosmotic and heat shock by preventing the aggregation of stress-denatured proteins, in association with DnaK and GrpE. It is the nucleotide exchange factor for DnaK and may function as a thermosensor. Unfolded proteins bind initially to DnaJ; upon interaction with the DnaJ-bound protein, DnaK hydrolyzes its bound ATP, resulting in the formation of a stable complex. GrpE releases ADP from DnaK; ATP binding to DnaK triggers the release of the substrate protein, thus completing the reaction cycle. Several rounds of ATP-dependent interactions between DnaJ, DnaK and GrpE are required for fully efficient folding. The sequence is that of Protein GrpE from Synechococcus sp. (strain WH7803).